The chain runs to 466 residues: Ribulose bisphosphate carboxylase large chain (466 aa).

An N6,N6,N6-trimethyllysine modification is found at Lys4. Substrate is bound by residues Asn113 and Thr163. Lys165 functions as the Proton acceptor in the catalytic mechanism. Lys167 contacts substrate. Residues Lys191, Asp193, and Glu194 each coordinate Mg(2+). Lys191 carries the post-translational modification N6-carboxylysine. His284 acts as the Proton acceptor in catalysis. Residues Arg285, His317, and Ser369 each contribute to the substrate site.

It belongs to the RuBisCO large chain family. Type I subfamily. In terms of assembly, heterohexadecamer of 8 large chains and 8 small chains; disulfide-linked. The disulfide link is formed within the large subunit homodimers. Mg(2+) serves as cofactor. In terms of processing, the disulfide bond which can form in the large chain dimeric partners within the hexadecamer appears to be associated with oxidative stress and protein turnover.

The protein resides in the plastid. The protein localises to the chloroplast. It catalyses the reaction 2 (2R)-3-phosphoglycerate + 2 H(+) = D-ribulose 1,5-bisphosphate + CO2 + H2O. The catalysed reaction is D-ribulose 1,5-bisphosphate + O2 = 2-phosphoglycolate + (2R)-3-phosphoglycerate + 2 H(+). RuBisCO catalyzes two reactions: the carboxylation of D-ribulose 1,5-bisphosphate, the primary event in carbon dioxide fixation, as well as the oxidative fragmentation of the pentose substrate in the photorespiration process. Both reactions occur simultaneously and in competition at the same active site. The protein is Ribulose bisphosphate carboxylase large chain of Nelsonia canescens (Blue pussyleaf).